Consider the following 301-residue polypeptide: MTEEFDTTGVCTGTWWSSSNGMFSGCSLPRSAEIVVDFGEIEWQNIDTLDAKTYNENYLSTSTFLGNANLDTTSQIYVSSPSNIHEEERYNQINSFLEGLFDSSEQLLVPNCPKPELFESFHFFDDVFPNESRMISVFDHQKPKEDMQACKSLTTCKRASEKSGELEDIESSQPLKRPRLETPSHFPSFKVRKEKLGDRITALQQLVSPFGKTDTASVLHDAIDYIKFLQEQITEKVSTSPHLNSIGSGEQKQWSDKSSNNTHNQNCSPRQDLRSRGLCLMPISSTFSTPPQHLDTSSLWN.

A KRAB domain is found at 29-106 (PRSAEIVVDF…LEGLFDSSEQ (78 aa)). Disordered stretches follow at residues 161–184 (EKSGELEDIESSQPLKRPRLETPS) and 239–272 (TSPHLNSIGSGEQKQWSDKSSNNTHNQNCSPRQD). The region spanning 180-229 (LETPSHFPSFKVRKEKLGDRITALQQLVSPFGKTDTASVLHDAIDYIKFL) is the bHLH domain. The segment covering 239 to 269 (TSPHLNSIGSGEQKQWSDKSSNNTHNQNCSP) has biased composition (polar residues).

In terms of assembly, homodimer. Mature root endodermis.

It is found in the nucleus. The chain is Transcription factor bHLH103 (BHLH103) from Arabidopsis thaliana (Mouse-ear cress).